Here is a 457-residue protein sequence, read N- to C-terminus: Cysteine--tRNA ligase (457 aa).

Cys31 is a Zn(2+) binding site. Positions 33-43 (PTVYNYAHIGN) match the 'HIGH' region motif. Zn(2+) contacts are provided by Cys211, His236, and Glu240. Positions 269–273 (KMSKS) match the 'KMSKS' region motif. Lys272 is an ATP binding site.

This sequence belongs to the class-I aminoacyl-tRNA synthetase family. Monomer. Requires Zn(2+) as cofactor.

It localises to the cytoplasm. The catalysed reaction is tRNA(Cys) + L-cysteine + ATP = L-cysteinyl-tRNA(Cys) + AMP + diphosphate. The polypeptide is Cysteine--tRNA ligase (Xanthomonas campestris pv. campestris (strain ATCC 33913 / DSM 3586 / NCPPB 528 / LMG 568 / P 25)).